Consider the following 62-residue polypeptide: MAKKVKGNRVQVILECTEHKESGMPGISRYITTKNRKNTTQRLELKKYNPILRRMTLHKEIK.

This sequence belongs to the bacterial ribosomal protein bL33 family.

In Porphyromonas gingivalis (strain ATCC 33277 / DSM 20709 / CIP 103683 / JCM 12257 / NCTC 11834 / 2561), this protein is Large ribosomal subunit protein bL33.